The primary structure comprises 529 residues: FAD-binding monooxygenase BOA2 (529 aa).

FAD contacts are provided by residues 58–61, 70–71, and Tyr-76; these read VWWK and DI. An NADP(+)-binding site is contributed by 68-70; sequence ACD. Residues 198 to 204 and 221 to 222 each bind NADP(+); these read TGPSACQ and RS.

The protein belongs to the FAD-binding monooxygenase family. It depends on FAD as a cofactor.

It participates in polyketide biosynthesis. Functionally, FAD-binding monooxygenase; part of the gene cluster A that mediates the biosynthesis of botcinic acid and its botcinin derivatives, acetate-derived polyketides that contribute to virulence when combined with the sesquiterpene botrydial. Botcinic acid and its derivatives have been shown to induce chlorosis and necrosis during host plant infection, but also have antifungal activities. Two polyketide synthases, BOA6 and BOA9, are involved in the biosynthesis of botcinins. BOA6 mediates the formation of the per-methylated tetraketide core by condensation of four units of malonyl-CoA with one unit of acetyl-CoA, which would be methylated in activated methylene groups to yield a bicyclic acid intermediate that could then either be converted to botrylactone derivatives or lose the starter acetate unit through a retro-Claisen type C-C bond cleavage to yield botcinin derivatives. The second polyketide synthase, BOA9, is probably required for the biosynthesis of the tetraketide side chain of botcinins. The methyltransferase (MT) domain within BOA6 is probably responsible for the incorporation of four methyl groups. The trans-enoyl reductase BOA5 might take over the enoyl reductase function of BOA6 that misses an ER domain. The monooxygenases BOA2, BOA3 and BOA4 might be involved in further hydroxylations at C4, C5 and C8, whereas BOA7, close to BOA9, could potentially be involved in the hydroxylation at C4 in the side chain of botcinins. In Botryotinia fuckeliana (strain B05.10) (Noble rot fungus), this protein is FAD-binding monooxygenase BOA2.